A 311-amino-acid polypeptide reads, in one-letter code: Formimidoylglutamase (311 aa).

Residues His127, Asp152, His154, Asp156, Cys236, and Asp238 each contribute to the Mn(2+) site.

Belongs to the arginase family. Requires Mn(2+) as cofactor.

The enzyme catalyses N-formimidoyl-L-glutamate + H2O = formamide + L-glutamate. It functions in the pathway amino-acid degradation; L-histidine degradation into L-glutamate; L-glutamate from N-formimidoyl-L-glutamate (hydrolase route): step 1/1. In terms of biological role, catalyzes the conversion of N-formimidoyl-L-glutamate to L-glutamate and formamide. The chain is Formimidoylglutamase from Macrococcus caseolyticus (strain JCSC5402) (Macrococcoides caseolyticum).